A 350-amino-acid chain; its full sequence is MTKSYSEESMMLESQSSSNWTDKCHSSSQDERDVDKTSEPMLNDMEDDDDAGLNRLEDEDDEEEEEEEEDGDDTKPKRRGPKKKKMTKARMQRFKMRRMKANARERNRMHGLNDALESLRKVVPCYSKTQKLSKIETLRLAKNYIWALSEILRSGKSPDLMSFVQALCKGLSQPTTNLVAGCLQLNPRTFLPEQSQEMPPHMQTASASFSALPYSYQTPGLPSPPYGTMDSSHIFHVKPHAYGSALEPFFDTTLTDCTSPSFDGPLSPPLSVNGNFSFKHEPSSEFEKNYAFTMHYQAAGLAGAQGHAASLYAGSTQRCDIPMENIMSYDGHSHHERVMNAQLNAIFHDS.

The interval 1 to 91 is disordered; sequence MTKSYSEESM…KKKKMTKARM (91 aa). Over residues 7 to 18 the composition is skewed to low complexity; the sequence is EESMMLESQSSS. Residues 22–38 show a composition bias toward basic and acidic residues; the sequence is DKCHSSSQDERDVDKTS. Residues 44–72 show a composition bias toward acidic residues; sequence DMEDDDDAGLNRLEDEDDEEEEEEEEDGD. Basic residues predominate over residues 76-91; that stretch reads PKRRGPKKKKMTKARM. The Nuclear localization signal motif lies at 82 to 88; sequence KKKKMTK. The bHLH domain occupies 96–148; that stretch reads MRRMKANARERNRMHGLNDALESLRKVVPCYSKTQKLSKIETLRLAKNYIWAL.

As to quaternary structure, efficient DNA binding requires dimerization with another bHLH protein. As to expression, in the embryo, expressed broadly in a subset of primary neurons in the brain and spinal cord. At 28 hours post-fertilization (hpf), regions of expression include telencephalon, olfactory placode, epiphysis, cranial ganglia, acoustic ganglia, Rohon-Beard mechano-sensory neurons and motoneurons. In 2 day postembryonic brain, expressed in many brain regions but absent from subpallium, the ventral preoptic region, ventral thalamus and hypothalamus; sites of expression extend laterally from the ventricular proliferative regions and correspond to freshly determined cell populations. In adult, expressed in all tissues examined with highest levels in brain.

The protein localises to the cytoplasm. Its subcellular location is the nucleus. In terms of biological role, may act as a transcriptional activator. Differentiation factor required for neurogenesis. Acts as an upstream activator of isl1. This is Neurogenic differentiation factor 1 from Danio rerio (Zebrafish).